The primary structure comprises 392 residues: Tryptophan 2,3-dioxygenase (392 aa).

Residues 57-61 (FIVTH) and Arg128 each bind substrate. Heme is bound at residue His313. Thr328 lines the substrate pocket.

This sequence belongs to the tryptophan 2,3-dioxygenase family. Homotetramer. Dimer of dimers. It depends on heme as a cofactor.

It catalyses the reaction L-tryptophan + O2 = N-formyl-L-kynurenine. The protein operates within amino-acid degradation; L-tryptophan degradation via kynurenine pathway; L-kynurenine from L-tryptophan: step 1/2. It functions in the pathway pigment biosynthesis; ommochrome biosynthesis. Heme-dependent dioxygenase that catalyzes the oxidative cleavage of the L-tryptophan (L-Trp) pyrrole ring and converts L-tryptophan to N-formyl-L-kynurenine. Catalyzes the oxidative cleavage of the indole moiety. This Anopheles gambiae (African malaria mosquito) protein is Tryptophan 2,3-dioxygenase.